The primary structure comprises 705 residues: DNA ligase (705 aa).

NAD(+) is bound by residues 43-47, 92-93, and aspartate 123; these read DAEYD and SL. The active-site N6-AMP-lysine intermediate is the lysine 125. Residues arginine 146, glutamate 184, lysine 304, and lysine 328 each coordinate NAD(+). Zn(2+) is bound by residues cysteine 422, cysteine 425, cysteine 440, and cysteine 445. A BRCT domain is found at 607 to 696; that stretch reads TPVTPLAGKK…EEISGQAADD (90 aa). The interval 684–705 is disordered; that stretch reads SESEEISGQAADDYENSLLRVQ.

It belongs to the NAD-dependent DNA ligase family. LigA subfamily. Mg(2+) is required as a cofactor. The cofactor is Mn(2+).

It catalyses the reaction NAD(+) + (deoxyribonucleotide)n-3'-hydroxyl + 5'-phospho-(deoxyribonucleotide)m = (deoxyribonucleotide)n+m + AMP + beta-nicotinamide D-nucleotide.. In terms of biological role, DNA ligase that catalyzes the formation of phosphodiester linkages between 5'-phosphoryl and 3'-hydroxyl groups in double-stranded DNA using NAD as a coenzyme and as the energy source for the reaction. It is essential for DNA replication and repair of damaged DNA. This is DNA ligase from Oleidesulfovibrio alaskensis (strain ATCC BAA-1058 / DSM 17464 / G20) (Desulfovibrio alaskensis).